The following is a 76-amino-acid chain: Defensin-like protein 163 (76 aa).

The first 27 residues, methionine 1–glycine 27, serve as a signal peptide directing secretion. 4 disulfide bridges follow: cysteine 33–cysteine 76, cysteine 43–cysteine 62, cysteine 48–cysteine 70, and cysteine 52–cysteine 72.

Belongs to the DEFL family.

Its subcellular location is the secreted. The polypeptide is Defensin-like protein 163 (LCR24) (Arabidopsis thaliana (Mouse-ear cress)).